Here is a 170-residue protein sequence, read N- to C-terminus: Peptide methionine sulfoxide reductase MsrA (170 aa).

Residue Cys14 is part of the active site.

This sequence belongs to the MsrA Met sulfoxide reductase family.

It catalyses the reaction L-methionyl-[protein] + [thioredoxin]-disulfide + H2O = L-methionyl-(S)-S-oxide-[protein] + [thioredoxin]-dithiol. It carries out the reaction [thioredoxin]-disulfide + L-methionine + H2O = L-methionine (S)-S-oxide + [thioredoxin]-dithiol. Its function is as follows. Has an important function as a repair enzyme for proteins that have been inactivated by oxidation. Catalyzes the reversible oxidation-reduction of methionine sulfoxide in proteins to methionine. The protein is Peptide methionine sulfoxide reductase MsrA of Streptomyces avermitilis (strain ATCC 31267 / DSM 46492 / JCM 5070 / NBRC 14893 / NCIMB 12804 / NRRL 8165 / MA-4680).